The primary structure comprises 284 residues: Tropomyosin alpha-1 chain (284 aa).

An N-acetylmethionine modification is found at M1. A disordered region spans residues 1–38; it reads MDAIKKKMQMLKLDKENALDRAEQAEADKKAAEDRSKQ. The stretch at 1–284 forms a coiled coil; it reads MDAIKKKMQM…DHALNDMTSI (284 aa). Basic and acidic residues predominate over residues 12 to 38; the sequence is KLDKENALDRAEQAEADKKAAEDRSKQ. A31, S45, and K51 each carry phosphoserine. The disordered stretch occupies residues 116–136; sequence AEKAADESERGMKVIESRAQK. Phosphoserine is present on residues S174, S186, and S206. K213 carries the N6-acetyllysine modification. S252 bears the Phosphoserine mark. Y261 carries the phosphotyrosine modification. At S271 the chain carries Phosphoserine. The residue at position 283 (S283) is a Phosphoserine; by DAPK1.

It belongs to the tropomyosin family. In terms of assembly, homodimer. Heterodimer of an alpha (TPM1, TPM3 or TPM4) and a beta (TPM2) chain. Interacts with HRG (via the HRR domain); the interaction contributes to the antiangiogenic properties of the histidine/proline-rich region (HRR) of HRG. Interacts (via N-terminus) with LMOD2 (via N-terminus) and TMOD1 (via N-terminus). In terms of processing, phosphorylated at Ser-283 by DAPK1 in response to oxidative stress and this phosphorylation enhances stress fiber formation in endothelial cells. In terms of tissue distribution, detected in primary breast cancer tissues but undetectable in normal breast tissues in Sudanese patients. Isoform 1 is expressed in adult and fetal skeletal muscle and cardiac tissues, with higher expression levels in the cardiac tissues. Isoform 10 is expressed in adult and fetal cardiac tissues, but not in skeletal muscle.

The protein localises to the cytoplasm. The protein resides in the cytoskeleton. Its function is as follows. Binds to actin filaments in muscle and non-muscle cells. Plays a central role, in association with the troponin complex, in the calcium dependent regulation of vertebrate striated muscle contraction. Smooth muscle contraction is regulated by interaction with caldesmon. In non-muscle cells is implicated in stabilizing cytoskeleton actin filaments. This chain is Tropomyosin alpha-1 chain (TPM1), found in Homo sapiens (Human).